We begin with the raw amino-acid sequence, 421 residues long: tRNA(Ile)-lysidine synthase (421 aa).

Residue serine 26–serine 31 coordinates ATP.

Belongs to the tRNA(Ile)-lysidine synthase family.

The protein resides in the cytoplasm. It carries out the reaction cytidine(34) in tRNA(Ile2) + L-lysine + ATP = lysidine(34) in tRNA(Ile2) + AMP + diphosphate + H(+). Ligates lysine onto the cytidine present at position 34 of the AUA codon-specific tRNA(Ile) that contains the anticodon CAU, in an ATP-dependent manner. Cytidine is converted to lysidine, thus changing the amino acid specificity of the tRNA from methionine to isoleucine. The chain is tRNA(Ile)-lysidine synthase from Streptococcus thermophilus (strain CNRZ 1066).